The primary structure comprises 192 residues: Hydrophobin-like protein rodD (192 aa).

Cystine bridges form between cysteine 45-cysteine 106, cysteine 50-cysteine 99, and cysteine 107-cysteine 112.

Belongs to the fungal hydrophobin family. As to quaternary structure, self-assembles to form functional amyloid fibrils called rodlets. Self-assembly into fibrillar rodlets occurs spontaneously at hydrophobic:hydrophilic interfaces and the rodlets further associate laterally to form amphipathic monolayers.

Functionally, aerial growth, conidiation, and dispersal of filamentous fungi in the environment rely upon a capability of their secreting small amphipathic proteins called hydrophobins (HPBs) with low sequence identity. Class I can self-assemble into an outermost layer of rodlet bundles on aerial cell surfaces, conferring cellular hydrophobicity that supports fungal growth, development and dispersal; whereas Class II form highly ordered films at water-air interfaces through intermolecular interactions but contribute nothing to the rodlet structure. RodD is a an hydrophobin-like protein that, unlike rodA, is not required for rodlet formation. The protein is Hydrophobin-like protein rodD of Aspergillus fumigatus (strain ATCC MYA-4609 / CBS 101355 / FGSC A1100 / Af293) (Neosartorya fumigata).